A 622-amino-acid polypeptide reads, in one-letter code: MAAPIAEELAKKQQAISVAEFFEKNRQILGFDSAPRSLITTVKEAVDNSLDACEEAEILPDILLHIERVGKDNVSVIVEDNGPGIVKEQIPKVFAKLLYGSRFHALKQSRGQQGIGISASVLYAQLTAGHPTSVISKIGPDSPAHHYEVMINTSTNDPEILLDEVIDWDRPHGTRVELEMEASYVKGRRQSIYEYLKATAIVNPHARLTLIEPDGNEVIFDRATDKLPIPAKEILPHPHGIELGTLMKMLRYTDRQKLAPFLRYSFSKIGLLTAEEICKAAGLDTEMLPSKLTRDQTKKLLDAFKKVKIMAPPTDCLSPIGEELIYKGLEKEFNVDFIATTTRSPSVFSGNPFVVEVGIAYGGVLQKDDRIDIMRFANRVPLLYQQGGCATTHAVEGIKWKQYGLNQPGGGMPTGPVVLLVHVASTNVPFTSESKDAIADIPEIRDEVELAIKEVSRKLNRYLNRQVSLKKRREKEIIITKVLPKMAQKLADTLERDLPDINPVVAKVMGNLLVMRHVEHGANGDAAVTIKVKNFGSKLTEFKLHDMLPYEISDVSPEPKVISMGSDFDYVWTMKVSPEGSKAVTYSLSSMSEDEIKRLPQLIVEGLDEELVTGAKAIKGLI.

ATP-binding positions include N48, D80, 101 to 102 (SR), 111 to 118 (GQQGIGIS), and K435.

This sequence belongs to the TOP6B family. As to quaternary structure, homodimer. Heterotetramer of two Top6A and two Top6B chains.

It catalyses the reaction ATP-dependent breakage, passage and rejoining of double-stranded DNA.. Functionally, relaxes both positive and negative superturns and exhibits a strong decatenase activity. The chain is Type 2 DNA topoisomerase 6 subunit B from Methanococcoides burtonii (strain DSM 6242 / NBRC 107633 / OCM 468 / ACE-M).